A 116-amino-acid polypeptide reads, in one-letter code: Antimicrobial peptide 1b (116 aa).

The first 34 residues, 1–34 (MKPHMSATVLRAPRVAAILLAVVLAAVLATAVNG), serve as a signal peptide directing secretion. A Chitin-binding type-1 domain is found at 35–77 (AQRCGDQARGAKCPNCLCCGKYGFCGSGDAYCGAGSCQSQCRG). Cystine bridges form between Cys38-Cys53, Cys47-Cys59, Cys50-Cys78, Cys52-Cys66, and Cys71-Cys75. A propeptide spanning residues 80 to 116 (DDVVGQALPAEPGSTRATAASSASARGLNLTATTGGP) is cleaved from the precursor. Positions 89 to 116 (AEPGSTRATAASSASARGLNLTATTGGP) are disordered. Over residues 93–105 (STRATAASSASAR) the composition is skewed to low complexity.

In terms of biological role, binds chitin. Has antifungal activity against the fungi F.solani (IC(50)=5 ug/ml), F.verticillioides (IC(50)=30 ug/ml), F.oxysporum (IC(50)=5 ug/ml), B.sorokiniana (IC(50)=5 ug/ml), B.cinerea (IC(50)=20 ug/ml) and N.crassa (IC(50)=10 ug/ml). Inhibits hyphal elongation and causes browning of hyphae in F.oxysporum. Causes destruction and discoloration of spores in B.sorokiniana. Inhibits the development of disease caused by the fungus P.infestans on potato tubers. Has antibacterial activity against the Gram-negative bacteria P.syringae and E.carotovora, and the Gram-positive bacterium C.michiganensis. Functionally, has antifungal activity against F.verticillioides (IC(50)=2.7 ug/ml). At concentrations between 45 uM and 225 uM, inhibits activity of metalloproteinase fungalysin Fv-cpm from F.verticillioides. This chain is Antimicrobial peptide 1b, found in Triticum kiharae (Wheat).